The following is a 1603-amino-acid chain: Vitellogenin-4 (1603 aa).

The signal sequence occupies residues 1–15 (MKSIIIASLVALAIA). The Vitellogenin domain maps to 24-685 (FSPKSEYVYK…EKNAFLPKEV (662 aa)). N-linked (GlcNAc...) asparagine glycosylation occurs at Asn-1266. The 170-residue stretch at 1306–1475 (ATCKVDQSEV…SYLLKNEECE (170 aa)) folds into the VWFD domain. Disulfide bonds link Cys-1308–Cys-1438 and Cys-1330–Cys-1474.

Expressed in the intestine of adult hermaphrodites.

It localises to the secreted. Its function is as follows. Precursor of the egg-yolk proteins that are sources of nutrients during embryonic development. Together with other vitellogenins, may play a role in modulating life-span, acting via induction of autophagy and lysosomal lipolysis. This is Vitellogenin-4 (vit-4) from Caenorhabditis elegans.